Consider the following 26-residue polypeptide: Delta-hemolysin (26 aa).

The residue at position 1 (Met-1) is an N-formylmethionine.

Belongs to the delta-lysin family.

The protein resides in the secreted. Its subcellular location is the host cell membrane. In terms of biological role, lyses erythrocytes and many other mammalian cells. The chain is Delta-hemolysin (hld) from Staphylococcus aureus (strain MSSA476).